The following is a 1728-amino-acid chain: Mitochondrial 3' processome subunit 1 (1728 aa).

A mitochondrion-targeting transit peptide spans 1 to 117 (MRRLILSQTL…AGKMTGSSRF (117 aa)). Disordered regions lie at residues 45-71 (HRKR…SGDG), 88-156 (ESPV…IGQQ), and 829-863 (GCNR…PKGT).

As to quaternary structure, component of the mitochondrial 3' processome (MPsome) complex composed at least of terminal uridylyltransferase KRET1/TUT1, 3'-5' exonuclease DSS1, MPSS1, MPSS2 and MPSS3. Within the complex, interacts with KRET1.

It localises to the mitochondrion. Its function is as follows. As part of the mitochondrial 3' processome (MPsome), involved in the maturation of guided RNA (gRNA) precursors. The chain is Mitochondrial 3' processome subunit 1 from Trypanosoma brucei brucei.